A 61-amino-acid chain; its full sequence is MPFVKIDLFEGRSQEQKIQLAREVTEVVSRVAKAPKEAIHVFINDMPEGTYYPHGEMKKKG.

Catalysis depends on proline 2, which acts as the Proton acceptor; via imino nitrogen.

Belongs to the 4-oxalocrotonate tautomerase family.

This is Probable tautomerase SMU_1087 from Streptococcus mutans serotype c (strain ATCC 700610 / UA159).